Here is a 137-residue protein sequence, read N- to C-terminus: MERTFAIIKPDAVERNVTGKVLAMIEEGGFKIVGMKKIRLSKCQAEGFYYVHKERPFFGDLCAFMSRGPVIALVLEKENAIADWRALMGATNPANAEAGTIRKALGVSIEENTVHGSDSPESASYEIPYFFNQLELV.

The ATP site is built by Lys-9, Phe-57, Arg-85, Thr-91, Arg-102, and Asn-112. Catalysis depends on His-115, which acts as the Pros-phosphohistidine intermediate.

The protein belongs to the NDK family. As to quaternary structure, homotetramer. Requires Mg(2+) as cofactor.

It is found in the cytoplasm. The enzyme catalyses a 2'-deoxyribonucleoside 5'-diphosphate + ATP = a 2'-deoxyribonucleoside 5'-triphosphate + ADP. It carries out the reaction a ribonucleoside 5'-diphosphate + ATP = a ribonucleoside 5'-triphosphate + ADP. Functionally, major role in the synthesis of nucleoside triphosphates other than ATP. The ATP gamma phosphate is transferred to the NDP beta phosphate via a ping-pong mechanism, using a phosphorylated active-site intermediate. The polypeptide is Nucleoside diphosphate kinase (Geobacter sp. (strain M21)).